The primary structure comprises 287 residues: Inhibitory synaptic factor 1 (287 aa).

The segment at 1 to 22 (MSQSRAPAREPSETPSQREQIR) is disordered. A coiled-coil region spans residues 25–58 (MKMVIQQLEGILKELKDVAHELREVVGQIDKLTS). 2 disordered regions span residues 113-174 (RRSA…GTRE) and 189-287 (CDDD…NKDL). Over residues 153–167 (EEASSSTHSQSQKTS) the composition is skewed to low complexity. The span at 189–209 (CDDDEDEDEDEDGRDEEEDKL) shows a compositional bias: acidic residues. Over residues 259–274 (RNSSTQTVSDKSTQTL) the composition is skewed to polar residues.

It belongs to the INSYN1 family.

It localises to the postsynaptic density. In terms of biological role, may be a component of the protein machinery at the inhibitory synapses, probably acting as a scaffold. The chain is Inhibitory synaptic factor 1 from Danio rerio (Zebrafish).